Reading from the N-terminus, the 256-residue chain is Phosphate import ATP-binding protein PstB (256 aa).

One can recognise an ABC transporter domain in the interval 10-251; that stretch reads IRTVNVNFYY…PEQKQTEDYI (242 aa). 42–49 is an ATP binding site; the sequence is GPSGCGKS.

Belongs to the ABC transporter superfamily. Phosphate importer (TC 3.A.1.7) family. The complex is composed of two ATP-binding proteins (PstB), two transmembrane proteins (PstC and PstA) and a solute-binding protein (PstS).

It localises to the cell inner membrane. The catalysed reaction is phosphate(out) + ATP + H2O = ADP + 2 phosphate(in) + H(+). In terms of biological role, part of the ABC transporter complex PstSACB involved in phosphate import. Responsible for energy coupling to the transport system. The protein is Phosphate import ATP-binding protein PstB of Syntrophus aciditrophicus (strain SB).